The primary structure comprises 339 residues: Undecaprenyl-phosphate 4-deoxy-4-formamido-L-arabinose transferase (339 aa).

The next 2 membrane-spanning stretches (helical) occupy residues 235-255 and 269-289; these read LSLV…FLLV and LFVL…GMGL.

The protein belongs to the glycosyltransferase 2 family.

Its subcellular location is the cell inner membrane. The catalysed reaction is UDP-4-deoxy-4-formamido-beta-L-arabinose + di-trans,octa-cis-undecaprenyl phosphate = 4-deoxy-4-formamido-alpha-L-arabinopyranosyl di-trans,octa-cis-undecaprenyl phosphate + UDP. Its pathway is glycolipid biosynthesis; 4-amino-4-deoxy-alpha-L-arabinose undecaprenyl phosphate biosynthesis; 4-amino-4-deoxy-alpha-L-arabinose undecaprenyl phosphate from UDP-4-deoxy-4-formamido-beta-L-arabinose and undecaprenyl phosphate: step 1/2. It participates in bacterial outer membrane biogenesis; lipopolysaccharide biosynthesis. Functionally, catalyzes the transfer of 4-deoxy-4-formamido-L-arabinose from UDP to undecaprenyl phosphate. The modified arabinose is attached to lipid A and is required for resistance to polymyxin and cationic antimicrobial peptides. This is Undecaprenyl-phosphate 4-deoxy-4-formamido-L-arabinose transferase from Pseudomonas paraeruginosa (strain DSM 24068 / PA7) (Pseudomonas aeruginosa (strain PA7)).